Here is a 130-residue protein sequence, read N- to C-terminus: MAETQAPTGYLFSEKHEWVKVEGDMALIGISDFAQSALGDIVFVDLPKTGKNIKQFETFGTIESVKAAEDLYAPIGGEVIESNSALSKNPGDVNSKPFDSWMIKVKGFSTSELDKLLTPEKYKALVAGLE.

The 82-residue stretch at 25 to 106 (MALIGISDFA…PFDSWMIKVK (82 aa)) folds into the Lipoyl-binding domain. The residue at position 66 (K66) is an N6-lipoyllysine.

Belongs to the GcvH family. As to quaternary structure, the glycine cleavage system is composed of four proteins: P, T, L and H. (R)-lipoate is required as a cofactor.

Its function is as follows. The glycine cleavage system catalyzes the degradation of glycine. The H protein shuttles the methylamine group of glycine from the P protein to the T protein. This chain is Glycine cleavage system H protein, found in Leptospira interrogans serogroup Icterohaemorrhagiae serovar copenhageni (strain Fiocruz L1-130).